Consider the following 134-residue polypeptide: ATP synthase epsilon chain (134 aa).

Belongs to the ATPase epsilon chain family. In terms of assembly, F-type ATPases have 2 components, CF(1) - the catalytic core - and CF(0) - the membrane proton channel. CF(1) has five subunits: alpha(3), beta(3), gamma(1), delta(1), epsilon(1). CF(0) has three main subunits: a, b and c.

It localises to the cell inner membrane. In terms of biological role, produces ATP from ADP in the presence of a proton gradient across the membrane. The protein is ATP synthase epsilon chain of Nitratidesulfovibrio vulgaris (strain ATCC 29579 / DSM 644 / CCUG 34227 / NCIMB 8303 / VKM B-1760 / Hildenborough) (Desulfovibrio vulgaris).